We begin with the raw amino-acid sequence, 287 residues long: DegV domain-containing protein DR_0500 (287 aa).

A DegV domain is found at 7–280; that stretch reads FAVVTDGGLD…PRALGVAAAP (274 aa). Hexadecanoate contacts are provided by S62 and S93.

Its function is as follows. May bind long-chain fatty acids, such as palmitate, and may play a role in lipid transport or fatty acid metabolism. In Deinococcus radiodurans (strain ATCC 13939 / DSM 20539 / JCM 16871 / CCUG 27074 / LMG 4051 / NBRC 15346 / NCIMB 9279 / VKM B-1422 / R1), this protein is DegV domain-containing protein DR_0500.